Consider the following 276-residue polypeptide: Large ribosomal subunit protein uL2 (276 aa).

2 disordered regions span residues 1–60 and 226–276; these read MSIK…RHKR and NAVD…KRNQ. Over residues 20 to 31 the composition is skewed to basic and acidic residues; sequence SKEEITREEPEK. 2 stretches are compositionally biased toward basic residues: residues 50–60 and 258–276; these read STRRQGGRHKR and KTRR…KRNQ.

It belongs to the universal ribosomal protein uL2 family. As to quaternary structure, part of the 50S ribosomal subunit. Forms a bridge to the 30S subunit in the 70S ribosome.

One of the primary rRNA binding proteins. Required for association of the 30S and 50S subunits to form the 70S ribosome, for tRNA binding and peptide bond formation. It has been suggested to have peptidyltransferase activity; this is somewhat controversial. Makes several contacts with the 16S rRNA in the 70S ribosome. The polypeptide is Large ribosomal subunit protein uL2 (Natranaerobius thermophilus (strain ATCC BAA-1301 / DSM 18059 / JW/NM-WN-LF)).